Here is a 387-residue protein sequence, read N- to C-terminus: Aminodeoxyfutalosine deaminase (387 aa).

Positions 1-10 (MRPAYDDPRT) are enriched in basic and acidic residues. Positions 1–37 (MRPAYDDPRTTDQPITRARPPPRAARGRRLGEEPLTE) are disordered. Positions 61 and 63 each coordinate Zn(2+). The substrate site is built by R116, D183, and G217. H244 serves as a coordination point for Zn(2+). The Proton donor role is filled by E247. Position 325 (D325) interacts with Zn(2+).

It belongs to the metallo-dependent hydrolases superfamily. Adenosine and AMP deaminases family. The cofactor is Zn(2+).

It catalyses the reaction 6-amino-6-deoxyfutalosine + H2O + H(+) = futalosine + NH4(+). It functions in the pathway quinol/quinone metabolism; menaquinone biosynthesis. Catalyzes the deamination of aminodeoxyfutalosine (AFL) into futalosine (FL), a step in the biosynthesis of menaquinone (MK, vitamin K2). In Streptomyces coelicolor (strain ATCC BAA-471 / A3(2) / M145), this protein is Aminodeoxyfutalosine deaminase.